A 100-amino-acid chain; its full sequence is Large ribosomal subunit protein uL23 (100 aa).

Belongs to the universal ribosomal protein uL23 family. As to quaternary structure, part of the 50S ribosomal subunit. Contacts protein L29, and trigger factor when it is bound to the ribosome.

Its function is as follows. One of the early assembly proteins it binds 23S rRNA. One of the proteins that surrounds the polypeptide exit tunnel on the outside of the ribosome. Forms the main docking site for trigger factor binding to the ribosome. The protein is Large ribosomal subunit protein uL23 of Prochlorococcus marinus (strain MIT 9215).